The sequence spans 224 residues: Elongation factor 1-beta 2 (224 aa).

The residue at position 2 (alanine 2) is an N-acetylalanine. One can recognise a GST C-terminal domain in the interval 14–65 (VKSVEEHLAGKTYISGDQLSVDDVKVYAAVPVKPSDAFPNASKWYESVASQL). Positions 89-139 (EAEAPAAAADDDDDMDLFGDETEEEKKAAEEREAAKKDTKKPKESGKSSVL) are disordered. Acidic residues predominate over residues 97–111 (ADDDDDMDLFGDETE). Residues 112 to 134 (EEKKAAEEREAAKKDTKKPKESG) are compositionally biased toward basic and acidic residues.

Belongs to the EF-1-beta/EF-1-delta family. As to quaternary structure, EF-1 is composed of 4 subunits: alpha, beta (1B-alpha=beta'), delta (1B-beta), and gamma (1B-gamma).

EF-1-beta and EF-1-delta stimulate the exchange of GDP bound to EF-1-alpha to GTP. This Arabidopsis thaliana (Mouse-ear cress) protein is Elongation factor 1-beta 2.